Here is a 358-residue protein sequence, read N- to C-terminus: Putative pyruvyl transferase EpsI (358 aa).

The protein belongs to the polysaccharide pyruvyl transferase family.

In terms of biological role, may be involved in the production of the exopolysaccharide (EPS) component of the extracellular matrix during biofilm formation. EPS is responsible for the adhesion of chains of cells into bundles. The sequence is that of Putative pyruvyl transferase EpsI (epsI) from Bacillus subtilis (strain 168).